Consider the following 173-residue polypeptide: ATP-dependent protease subunit HslV (173 aa).

Thr-2 is an active-site residue. Residues Gly-158, Asp-161, and Thr-164 each coordinate Na(+).

It belongs to the peptidase T1B family. HslV subfamily. A double ring-shaped homohexamer of HslV is capped on each side by a ring-shaped HslU homohexamer. The assembly of the HslU/HslV complex is dependent on binding of ATP.

The protein resides in the cytoplasm. It catalyses the reaction ATP-dependent cleavage of peptide bonds with broad specificity.. Allosterically activated by HslU binding. Functionally, protease subunit of a proteasome-like degradation complex believed to be a general protein degrading machinery. This is ATP-dependent protease subunit HslV from Mannheimia succiniciproducens (strain KCTC 0769BP / MBEL55E).